We begin with the raw amino-acid sequence, 945 residues long: Nonsense-mediated mRNA decay factor SMG8 (945 aa).

Disordered regions lie at residues 563–604 (RAEP…SANE) and 633–671 (AEAE…ERSA).

The protein belongs to the SMG8 family.

Involved in nonsense-mediated decay (NMD) of mRNAs containing premature stop codons. Probable component of kinase complex containing nonC and recruited to stalled ribosomes. The sequence is that of Nonsense-mediated mRNA decay factor SMG8 from Drosophila grimshawi (Hawaiian fruit fly).